The following is a 240-amino-acid chain: Adenylate dimethylallyltransferase (240 aa).

It belongs to the isopentenyl transferase family.

The enzyme catalyses dimethylallyl diphosphate + AMP = N(6)-(dimethylallyl)adenosine 5'-phosphate + diphosphate. Transfers dimethylallyl groups to AMP as part of the biosynthesis of cytokinin phytohormones. The polypeptide is Adenylate dimethylallyltransferase (ipt) (Agrobacterium vitis (Rhizobium vitis)).